Reading from the N-terminus, the 543-residue chain is Peptide chain release factor 3 (543 aa).

The 269-residue stretch at 21–289 (KKRRTFAIIS…ALSDWAPSPL (269 aa)) folds into the tr-type G domain. GTP contacts are provided by residues 30–37 (SHPDAGKT), 98–102 (DTPGH), and 152–155 (NKLD).

It belongs to the TRAFAC class translation factor GTPase superfamily. Classic translation factor GTPase family. PrfC subfamily.

The protein resides in the cytoplasm. Its function is as follows. Increases the formation of ribosomal termination complexes and stimulates activities of RF-1 and RF-2. It binds guanine nucleotides and has strong preference for UGA stop codons. It may interact directly with the ribosome. The stimulation of RF-1 and RF-2 is significantly reduced by GTP and GDP, but not by GMP. This Thiobacillus denitrificans (strain ATCC 25259 / T1) protein is Peptide chain release factor 3.